Reading from the N-terminus, the 296-residue chain is Ribosomal RNA small subunit methyltransferase A (296 aa).

S-adenosyl-L-methionine is bound by residues Asn30, Leu32, Gly57, Glu78, Asp103, and Asn128.

The protein belongs to the class I-like SAM-binding methyltransferase superfamily. rRNA adenine N(6)-methyltransferase family. RsmA subfamily.

The protein resides in the cytoplasm. The catalysed reaction is adenosine(1518)/adenosine(1519) in 16S rRNA + 4 S-adenosyl-L-methionine = N(6)-dimethyladenosine(1518)/N(6)-dimethyladenosine(1519) in 16S rRNA + 4 S-adenosyl-L-homocysteine + 4 H(+). Specifically dimethylates two adjacent adenosines (A1518 and A1519) in the loop of a conserved hairpin near the 3'-end of 16S rRNA in the 30S particle. May play a critical role in biogenesis of 30S subunits. In Staphylococcus epidermidis (strain ATCC 35984 / DSM 28319 / BCRC 17069 / CCUG 31568 / BM 3577 / RP62A), this protein is Ribosomal RNA small subunit methyltransferase A.